Here is a 286-residue protein sequence, read N- to C-terminus: Pheromone receptor transcription factor (286 aa).

Residue Ser2 is modified to N-acetylserine. Phosphoserine is present on Ser2. Positions 18 to 72 (RRKIEIKFIENKTRRHVTFSKRKHGIMKKAFELSVLTGTQVLLLVVSETGLVYTF) constitute an MADS-box domain. Positions 97–119 (PDDEEEDEEEDGDDDDDDDDDGN) are enriched in acidic residues. The tract at residues 97-137 (PDDEEEDEEEDGDDDDDDDDDGNDMQRQQPQQQQPQQQQQV) is disordered. The span at 122–136 (QRQQPQQQQPQQQQQ) shows a compositional bias: low complexity. Ser144 bears the Phosphoserine mark. The interval 167-264 (LGGANPNQNS…QQAFANAASP (98 aa)) is disordered. Residues 171 to 246 (NPNQNSMIQQ…QQQQQQQQQP (76 aa)) show a composition bias toward low complexity.

Homodimer. Binds DNA with a high specificity in complex with mating-type protein ALPHA1. Also binds DNA with a high specificity as a heterotetramer consisting of an ALPHA2 dimer and an MCM1 dimer. Interacts with YHP1 and YOX1, possibly leading to its inactivation. Interacts with ARG80 and ARG82.

Its subcellular location is the nucleus. Its function is as follows. Transcription factor required for the efficient replication of minichromosomes and the transcriptional regulation of early cell cycle genes. Activates transcription of ECB-dependent genes during the G1/M phase. Genes that contain a ECB (early cell box) element in their transcription regulatory region are transcribed only during G1/M phases. Interacts with the alpha-2 repressor or with the alpha-1 activator thereby regulating the expression of mating-type-specific genes. With ARG80, ARG81 and ARG82, coordinates the expression of arginine anabolic and catabolic genes in response to arginine. The polypeptide is Pheromone receptor transcription factor (MCM1) (Saccharomyces cerevisiae (strain ATCC 204508 / S288c) (Baker's yeast)).